The primary structure comprises 343 residues: Pseudaminic acid synthase (343 aa).

Residues 287 to 343 form the AFP-like domain; that stretch reads SLYASKDIKKGEIFSEENVKSVRPSFGLHPKFYQELLGKKASKDIEFGDALKESDFR.

The protein belongs to the pseudaminic acid synthase family. It depends on a divalent metal cation as a cofactor.

The catalysed reaction is 2,4-diacetamido-2,4,6-trideoxy-beta-L-altrose + phosphoenolpyruvate + H2O = pseudaminate + phosphate. Its function is as follows. Catalyzes the fifth step in the biosynthesis of pseudaminic acid, a sialic-acid-like sugar that is used to modify flagellin. Catalyzes the condensation of phosphoenolpyruvate with 2,4-diacetamido-2,4,6-trideoxy-beta-l-altropyranose, forming pseudaminic acid. This is Pseudaminic acid synthase (pseI) from Campylobacter jejuni subsp. jejuni serotype O:23/36 (strain 81-176).